The primary structure comprises 201 residues: 3-isopropylmalate dehydratase small subunit (201 aa).

It belongs to the LeuD family. LeuD type 1 subfamily. In terms of assembly, heterodimer of LeuC and LeuD.

The enzyme catalyses (2R,3S)-3-isopropylmalate = (2S)-2-isopropylmalate. It participates in amino-acid biosynthesis; L-leucine biosynthesis; L-leucine from 3-methyl-2-oxobutanoate: step 2/4. Its function is as follows. Catalyzes the isomerization between 2-isopropylmalate and 3-isopropylmalate, via the formation of 2-isopropylmaleate. The polypeptide is 3-isopropylmalate dehydratase small subunit (Shewanella pealeana (strain ATCC 700345 / ANG-SQ1)).